We begin with the raw amino-acid sequence, 146 residues long: Large ribosomal subunit protein uL16c (146 aa).

The protein belongs to the universal ribosomal protein uL16 family. Part of the 50S ribosomal subunit.

Its subcellular location is the plastid. It localises to the chloroplast. In Angiopteris evecta (Mule's foot fern), this protein is Large ribosomal subunit protein uL16c.